Reading from the N-terminus, the 157-residue chain is Small ribosomal subunit protein uS7 (157 aa).

It belongs to the universal ribosomal protein uS7 family. In terms of assembly, part of the 30S ribosomal subunit. Contacts proteins S9 and S11.

Its function is as follows. One of the primary rRNA binding proteins, it binds directly to 16S rRNA where it nucleates assembly of the head domain of the 30S subunit. Is located at the subunit interface close to the decoding center, probably blocks exit of the E-site tRNA. The protein is Small ribosomal subunit protein uS7 of Leptospira borgpetersenii serovar Hardjo-bovis (strain JB197).